A 747-amino-acid chain; its full sequence is Polyribonucleotide nucleotidyltransferase (747 aa).

Residues D493 and D499 each contribute to the Mg(2+) site. The 60-residue stretch at 560–619 folds into the KH domain; sequence PRIITLQINPEKIGALIGPGGKTVRGITEATGAQIDIEEDGRVYISTPDAAAAQQAVAMV. The 70-residue stretch at 629–698 folds into the S1 motif domain; that stretch reads GDIFLGKVVR…GTGKVSLSRR (70 aa). Residues 705-747 are disordered; that stretch reads TAEDRRAAGAGRGLRDGGGRSGGSDRGGDRGPRGDDRQRPRRR. 2 stretches are compositionally biased toward basic and acidic residues: residues 706 to 722 and 730 to 747; these read AEDR…RDGG and RGGD…PRRR.

It belongs to the polyribonucleotide nucleotidyltransferase family. Requires Mg(2+) as cofactor.

It is found in the cytoplasm. The catalysed reaction is RNA(n+1) + phosphate = RNA(n) + a ribonucleoside 5'-diphosphate. Its function is as follows. Involved in mRNA degradation. Catalyzes the phosphorolysis of single-stranded polyribonucleotides processively in the 3'- to 5'-direction. The chain is Polyribonucleotide nucleotidyltransferase from Roseiflexus sp. (strain RS-1).